Here is a 332-residue protein sequence, read N- to C-terminus: L-lactate dehydrogenase C chain (332 aa).

Ser-2 is modified (blocked amino end (Ser)). NAD(+) is bound by residues 29-57 (GNVG…DTNK) and Arg-99. Residues Arg-106, Asn-138, and Arg-169 each coordinate substrate. Asn-138 contributes to the NAD(+) binding site. His-193 serves as the catalytic Proton acceptor. Thr-248 provides a ligand contact to substrate.

It belongs to the LDH/MDH superfamily. LDH family. Homotetramer. Interacts with RABL2/RABL2A; binds preferentially to GTP-bound RABL2. Expressed within the midpiece of sperm tail (at protein level).

It is found in the cytoplasm. The enzyme catalyses (S)-lactate + NAD(+) = pyruvate + NADH + H(+). It participates in fermentation; pyruvate fermentation to lactate; (S)-lactate from pyruvate: step 1/1. Its function is as follows. Possible role in sperm motility. The polypeptide is L-lactate dehydrogenase C chain (Ldhc) (Mus musculus (Mouse)).